The following is a 605-amino-acid chain: Indole-3-acetic acid-amido synthetase GH3.8 (605 aa).

AMP is bound by residues Ser-115, 342–346 (MYASS), Tyr-365, Asp-421, and Arg-440.

It belongs to the IAA-amido conjugating enzyme family. Expressed in the inner floral organs (lodicules, stamens and carpels) and at lower levels in lemmas and paleas.

Functionally, catalyzes the synthesis of indole-3-acetic acid (IAA)-amino acid conjugates, providing a mechanism for the plant to cope with the presence of excessive free auxin. Produces more IAA-Asp levels than IAA-Ala levels in vitro. May participate in the activation of disease resistance by preventing the accumulation of free IAA, which reduces the expression of a group of auxin-responsive genes encoding expansins that control cell wall loosening and expansion. Contributes to late events in stamen and carpel differentiation, and influences floret fertility. The chain is Indole-3-acetic acid-amido synthetase GH3.8 (GH3.8) from Oryza sativa subsp. indica (Rice).